A 171-amino-acid chain; its full sequence is Orotate phosphoribosyltransferase (171 aa).

5-phospho-alpha-D-ribose 1-diphosphate is bound by residues Arg-85, Lys-86, Arg-88, His-90, and 110–118 (EDVVTTGNS). Thr-114 and Arg-142 together coordinate orotate.

It belongs to the purine/pyrimidine phosphoribosyltransferase family. PyrE subfamily. As to quaternary structure, homodimer. It depends on Mg(2+) as a cofactor.

It catalyses the reaction orotidine 5'-phosphate + diphosphate = orotate + 5-phospho-alpha-D-ribose 1-diphosphate. Its pathway is pyrimidine metabolism; UMP biosynthesis via de novo pathway; UMP from orotate: step 1/2. In terms of biological role, catalyzes the transfer of a ribosyl phosphate group from 5-phosphoribose 1-diphosphate to orotate, leading to the formation of orotidine monophosphate (OMP). The polypeptide is Orotate phosphoribosyltransferase (Thermoplasma acidophilum (strain ATCC 25905 / DSM 1728 / JCM 9062 / NBRC 15155 / AMRC-C165)).